Here is a 154-residue protein sequence, read N- to C-terminus: Small ribosomal subunit protein uS9 (154 aa).

Positions 135–154 (KESKKYGLKKARKAPQYSKR) are disordered. Positions 140–154 (YGLKKARKAPQYSKR) are enriched in basic residues.

It belongs to the universal ribosomal protein uS9 family.

In Salinispora arenicola (strain CNS-205), this protein is Small ribosomal subunit protein uS9.